Here is a 145-residue protein sequence, read N- to C-terminus: Bacilliredoxin BLi02578/BL01507 (145 aa).

The protein belongs to the bacilliredoxin family.

The chain is Bacilliredoxin BLi02578/BL01507 from Bacillus licheniformis (strain ATCC 14580 / DSM 13 / JCM 2505 / CCUG 7422 / NBRC 12200 / NCIMB 9375 / NCTC 10341 / NRRL NRS-1264 / Gibson 46).